The sequence spans 374 residues: Putative 12-oxophytodienoate reductase 5 (374 aa).

Residues 30–32 (PMT), Ala63, and Gln105 each bind FMN. A substrate-binding site is contributed by 177 to 180 (HGAN). Tyr182 functions as the Proton donor in the catalytic mechanism. Arg229 lines the FMN pocket. Position 270 (Arg270) interacts with substrate. Residues Gly300 and 321-322 (GR) each bind FMN.

The protein belongs to the NADH:flavin oxidoreductase/NADH oxidase family. FMN serves as cofactor.

Functionally, putative oxophytodienoate reductase that may be involved in the biosynthesis or metabolism of oxylipin signaling molecules. The polypeptide is Putative 12-oxophytodienoate reductase 5 (OPR5) (Oryza sativa subsp. japonica (Rice)).